The chain runs to 534 residues: Calcium-dependent protein kinase 18 (534 aa).

The disordered stretch occupies residues 1 to 49 (MGLCFSSPKATRRGTGSRNPNPDSPTQGKASEKVSNKNKKNTKKIQLRH). A lipid anchor (N-myristoyl glycine) is attached at G2. A compositionally biased stretch (polar residues) spans 14–29 (GTGSRNPNPDSPTQGK). Positions 36-47 (NKNKKNTKKIQL) are enriched in basic residues. Residues 71–331 (YTIGKLLGHG…AAQALSHSWV (261 aa)) form the Protein kinase domain. ATP contacts are provided by residues 77 to 85 (LGHGQFGFT) and K100. D197 acts as the Proton acceptor in catalysis. S237 bears the Phosphoserine mark. Residues 337 to 367 (ASEVPIDISVLNNMRQFVKFSRLKQIALRAL) form an autoinhibitory domain region. EF-hand domains are found at residues 374–409 (DELDDLRDQFDAIDIDKNGSISLEEMRQALAKDVPW), 411–446 (LKDARVAEILQANDSNTDGLVDFTEFVVAALHVNQL), 453–488 (KWQQRSRAAFDKFDIDGDGFITPEELRLQTGLKGSI), and 491–518 (LLEEADVDEDGRISINEFRRLLRSASLK). D387, D389, N391, S393, E398, D424, N426, D428, E435, D466, D468, D470, E477, D496, D498, D500, and R502 together coordinate Ca(2+). A Phosphoserine modification is found at S504. E507 lines the Ca(2+) pocket.

The protein belongs to the protein kinase superfamily. Ser/Thr protein kinase family. CDPK subfamily.

Its subcellular location is the membrane. It carries out the reaction L-seryl-[protein] + ATP = O-phospho-L-seryl-[protein] + ADP + H(+). The enzyme catalyses L-threonyl-[protein] + ATP = O-phospho-L-threonyl-[protein] + ADP + H(+). With respect to regulation, activated by calcium. Autophosphorylation may play an important role in the regulation of the kinase activity. In terms of biological role, may play a role in signal transduction pathways that involve calcium as a second messenger. This Arabidopsis thaliana (Mouse-ear cress) protein is Calcium-dependent protein kinase 18 (CPK18).